Consider the following 226-residue polypeptide: Protein DEHYDRATION-INDUCED 19 (226 aa).

The disordered stretch occupies residues 158–208 (FPTSDTEETSKPPISIPDDASVIKETPAQPWDSSIDSSLTREEREQKRKQA). The segment covering 196–205 (LTREEREQKR) has biased composition (basic and acidic residues).

This sequence belongs to the Di19 family.

This is Protein DEHYDRATION-INDUCED 19 (DI19-1) from Oryza sativa subsp. japonica (Rice).